Consider the following 254-residue polypeptide: Bowman-Birk type bran trypsin inhibitor (254 aa).

Residues 1-22 (MSNTTMATSTILLFLLAGLAAA) form the signal peptide. Positions 23-118 (HGDGDTTIRL…KCTAALDGLS (96 aa)) are excised as a propeptide. 3 repeats span residues 46-120 (KPWD…LSME), 121-187 (RPWK…LCTP), and 188-251 (RPWG…CKPR). 10 disulfides stabilise this stretch: C51–C248, C125–C185, C126–C143, C152–C159, C156–C172, C193–C248, C194–C209, C199–C207, C216–C223, and C220–C236. A propeptide spanning residues 252 to 254 (AEN) is cleaved from the precursor.

Belongs to the Bowman-Birk serine protease inhibitor family. As to expression, expressed in roots, leaves and flowers.

This Oryza sativa subsp. indica (Rice) protein is Bowman-Birk type bran trypsin inhibitor (RBBI3.3).